We begin with the raw amino-acid sequence, 314 residues long: tRNA pseudouridine synthase B (314 aa).

Residue His43 coordinates substrate. Asp48 serves as the catalytic Nucleophile. The substrate site is built by Tyr76, Tyr179, and Leu200.

It belongs to the pseudouridine synthase TruB family. Type 1 subfamily.

The catalysed reaction is uridine(55) in tRNA = pseudouridine(55) in tRNA. In terms of biological role, responsible for synthesis of pseudouridine from uracil-55 in the psi GC loop of transfer RNAs. The polypeptide is tRNA pseudouridine synthase B (Pectobacterium atrosepticum (strain SCRI 1043 / ATCC BAA-672) (Erwinia carotovora subsp. atroseptica)).